Here is a 168-residue protein sequence, read N- to C-terminus: Photosystem I assembly protein Ycf3 (168 aa).

TPR repeat units follow at residues 35 to 68 (AFTY…EIDP), 72 to 105 (SYIL…NPFL), and 120 to 153 (GEQA…TPGN).

It belongs to the Ycf3 family.

It localises to the plastid. It is found in the chloroplast thylakoid membrane. Its function is as follows. Essential for the assembly of the photosystem I (PSI) complex. May act as a chaperone-like factor to guide the assembly of the PSI subunits. The polypeptide is Photosystem I assembly protein Ycf3 (Buxus microphylla (Littleleaf boxwood)).